The primary structure comprises 121 residues: Cytochrome B5-like protein (121 aa).

The chain crosses the membrane as a helical span at residues 1–21 (MIAVIGLLLGFLVSALFLIQG). Positions 24 to 49 (RRTNDNQEKKRSSSEPVEDVVRPKSY) are disordered. A compositionally biased stretch (basic and acidic residues) spans 26-36 (TNDNQEKKRSS). Residues 46–121 (PKSYSKSEVA…IEDFYIGELH (76 aa)) enclose the Cytochrome b5 heme-binding domain. Heme-binding residues include His81 and His104.

This sequence belongs to the cytochrome b5 family.

It localises to the membrane. The sequence is that of Cytochrome B5-like protein from Arabidopsis thaliana (Mouse-ear cress).